Consider the following 215-residue polypeptide: Octanoyltransferase (215 aa).

The BPL/LPL catalytic domain occupies 31–206 (TTAPDEIWLV…QLVKHLDYAE (176 aa)). Substrate-binding positions include 70-77 (RGGQVTYH), 137-139 (SLG), and 150-152 (GLA). The active-site Acyl-thioester intermediate is C168.

Belongs to the LipB family.

It is found in the cytoplasm. It catalyses the reaction octanoyl-[ACP] + L-lysyl-[protein] = N(6)-octanoyl-L-lysyl-[protein] + holo-[ACP] + H(+). Its pathway is protein modification; protein lipoylation via endogenous pathway; protein N(6)-(lipoyl)lysine from octanoyl-[acyl-carrier-protein]: step 1/2. Functionally, catalyzes the transfer of endogenously produced octanoic acid from octanoyl-acyl-carrier-protein onto the lipoyl domains of lipoate-dependent enzymes. Lipoyl-ACP can also act as a substrate although octanoyl-ACP is likely to be the physiological substrate. In Pseudomonas fluorescens (strain Pf0-1), this protein is Octanoyltransferase.